We begin with the raw amino-acid sequence, 429 residues long: 28S rRNA (cytosine-C(5))-methyltransferase (429 aa).

Gly-2 carries the N-acetylglycine modification. A Phosphoserine modification is found at Ser-167. Residues 234–240 (CAAPGNK), Asp-258, Arg-263, and Asp-305 each bind S-adenosyl-L-methionine. Cys-359 functions as the Nucleophile in the catalytic mechanism.

The protein belongs to the class I-like SAM-binding methyltransferase superfamily. RsmB/NOP family. Ubiquitous. Detected in placenta, heart and skeletal muscle.

It localises to the nucleus. It is found in the nucleolus. It carries out the reaction cytidine(3782) in 28S rRNA + S-adenosyl-L-methionine = 5-methylcytidine(3782) in 28S rRNA + S-adenosyl-L-homocysteine + H(+). In terms of biological role, S-adenosyl-L-methionine-dependent methyltransferase that specifically methylates the C(5) position of cytosine 3782 (m5C3782) in 28S rRNA. m5C3782 promotes protein translation without affecting ribosome biogenesis and fidelity. Required for corpus callosum and cerebral cortex development. This Homo sapiens (Human) protein is 28S rRNA (cytosine-C(5))-methyltransferase.